The sequence spans 277 residues: Shikimate dehydrogenase (NADP(+)) (277 aa).

Shikimate is bound by residues 20-22 (SLS) and T67. K71 acts as the Proton acceptor in catalysis. D83 lines the NADP(+) pocket. Shikimate contacts are provided by N92 and D107. Residues 131–135 (GAGGV) and I219 contribute to the NADP(+) site. Y221 is a shikimate binding site. An NADP(+)-binding site is contributed by G242.

The protein belongs to the shikimate dehydrogenase family. As to quaternary structure, homodimer.

It catalyses the reaction shikimate + NADP(+) = 3-dehydroshikimate + NADPH + H(+). It participates in metabolic intermediate biosynthesis; chorismate biosynthesis; chorismate from D-erythrose 4-phosphate and phosphoenolpyruvate: step 4/7. Functionally, involved in the biosynthesis of the chorismate, which leads to the biosynthesis of aromatic amino acids. Catalyzes the reversible NADPH linked reduction of 3-dehydroshikimate (DHSA) to yield shikimate (SA). This chain is Shikimate dehydrogenase (NADP(+)), found in Pelobacter propionicus (strain DSM 2379 / NBRC 103807 / OttBd1).